A 386-amino-acid chain; its full sequence is 26S proteasome non-ATPase regulatory subunit 13 homolog A (386 aa).

An N-acetylalanine modification is found at Ala-2. The region spanning 173–347 (EFSDFYKSAL…GTIYVSWAQP (175 aa)) is the PCI domain.

It belongs to the proteasome subunit S11 family. Component of the 19S regulatory particle (RP/PA700) lid subcomplex of the 26S proteasome. The 26S proteasome is composed of a core protease (CP), known as the 20S proteasome, capped at one or both ends by the 19S regulatory particle (RP/PA700). The RP/PA700 complex is composed of at least 17 different subunits in two subcomplexes, the base and the lid, which form the portions proximal and distal to the 20S proteolytic core, respectively. As to expression, ubiquitous with highest expression in flowers.

Its function is as follows. Acts as a regulatory subunit of the 26S proteasome which is involved in the ATP-dependent degradation of ubiquitinated proteins. The sequence is that of 26S proteasome non-ATPase regulatory subunit 13 homolog A (RPN9A) from Arabidopsis thaliana (Mouse-ear cress).